A 188-amino-acid polypeptide reads, in one-letter code: Chitin synthase 2 (188 aa).

The protein belongs to the chitin synthase family.

Its subcellular location is the cell membrane. The enzyme catalyses [(1-&gt;4)-N-acetyl-beta-D-glucosaminyl](n) + UDP-N-acetyl-alpha-D-glucosamine = [(1-&gt;4)-N-acetyl-beta-D-glucosaminyl](n+1) + UDP + H(+). Polymerizes chitin, a structural polymer of the cell wall and septum, by transferring the sugar moiety of UDP-GlcNAc to the non-reducing end of the growing chitin polymer. This chain is Chitin synthase 2 (CHS2), found in Exophiala jeanselmei (Dematiaceous fungus).